A 328-amino-acid polypeptide reads, in one-letter code: 4-hydroxythreonine-4-phosphate dehydrogenase (328 aa).

Residue T125 coordinates substrate. A divalent metal cation is bound by residues H160, H203, and H269. Substrate-binding residues include K277, N286, and R295.

This sequence belongs to the PdxA family. As to quaternary structure, homodimer. A divalent metal cation serves as cofactor.

It localises to the cytoplasm. It carries out the reaction 4-(phosphooxy)-L-threonine + NAD(+) = 3-amino-2-oxopropyl phosphate + CO2 + NADH. Its pathway is cofactor biosynthesis; pyridoxine 5'-phosphate biosynthesis; pyridoxine 5'-phosphate from D-erythrose 4-phosphate: step 4/5. Functionally, catalyzes the NAD(P)-dependent oxidation of 4-(phosphooxy)-L-threonine (HTP) into 2-amino-3-oxo-4-(phosphooxy)butyric acid which spontaneously decarboxylates to form 3-amino-2-oxopropyl phosphate (AHAP). In Synechococcus sp. (strain RCC307), this protein is 4-hydroxythreonine-4-phosphate dehydrogenase.